The chain runs to 163 residues: Staphylokinase (163 aa).

The first 27 residues, 1 to 27 (MLKRSLLFLTVLLLLFSFSSITNEVSA), serve as a signal peptide directing secretion.

The protein belongs to the staphylokinase family.

It is found in the secreted. Potent plasminogen activator that converts plasminogen into plasmin. It forms a 1:1 complex with plasmin, which in turn activates other plasminogen molecules. The sequence is that of Staphylokinase from Staphylococcus phage S phi-C (Bacteriophage S phi-C).